A 324-amino-acid polypeptide reads, in one-letter code: Serine racemase (324 aa).

Residues serine 32, lysine 51, and threonine 52 each contribute to the ATP site. Lysine 56 (proton acceptor) is an active-site residue. An N6-(pyridoxal phosphate)lysine modification is found at lysine 56. Residue threonine 78 participates in Ca(2+) binding. Serine 81 acts as the Proton acceptor in catalysis. Asparagine 83 provides a ligand contact to pyridoxal 5'-phosphate. Residues glutamine 86 and tyrosine 118 each coordinate ATP. Aspartate 175 is a binding site for Mg(2+). Positions 182, 183, 184, and 185 each coordinate pyridoxal 5'-phosphate. Ca(2+)-binding residues include glutamate 207, alanine 211, and aspartate 213. Mg(2+) is bound by residues glutamate 207, alanine 211, and aspartate 213. Glutamate 207, alanine 211, and aspartate 213 together coordinate Mn(2+). Residue lysine 277 coordinates ATP. Serine 310 lines the pyridoxal 5'-phosphate pocket. Asparagine 313 serves as a coordination point for ATP.

This sequence belongs to the serine/threonine dehydratase family. Homodimer. Mg(2+) is required as a cofactor. Mn(2+) serves as cofactor. It depends on Ca(2+) as a cofactor. The cofactor is pyridoxal 5'-phosphate.

The enzyme catalyses L-serine = D-serine. It catalyses the reaction L-serine = pyruvate + NH4(+). The catalysed reaction is D-serine = pyruvate + NH4(+). Catalyzes the synthesis of D-serine from L-serine. Has dehydratase activity towards both L-serine and D-serine. The polypeptide is Serine racemase (srr) (Dictyostelium discoideum (Social amoeba)).